The following is a 309-amino-acid chain: Putative rhizopine-binding protein (309 aa).

The signal sequence occupies residues 1–20 (MKKFIIGIAAAVLVSTAAHA).

The protein belongs to the bacterial solute-binding protein 2 family.

It is found in the periplasm. Involved in rhizopine (L-3-O-methyl-scyllo-inosamine) catabolism. Could be involved in its high affinity transport. The sequence is that of Putative rhizopine-binding protein (mocB) from Rhizobium meliloti (Ensifer meliloti).